A 339-amino-acid chain; its full sequence is UPF0450 protein C17orf58 (339 aa).

The signal sequence occupies residues 1–17 (MTARAFWLLCLIVGSSP). The interval 17–191 (PEAPVAERKT…PQRDAEPGAE (175 aa)) is disordered. The span at 21–36 (VAERKTSPPHSRKPDS) shows a compositional bias: basic and acidic residues. Over residues 56–72 (APQRPRAAEVAPAARAW) the composition is skewed to low complexity. A compositionally biased stretch (basic and acidic residues) spans 112-125 (ASPRREPASEDAPR). The segment covering 132-163 (LRFPAARPPALATEGSAGHAHPNRPRAAALAP) has biased composition (low complexity). 3 disulfide bridges follow: Cys-193-Cys-267, Cys-197-Cys-271, and Cys-208-Cys-338. The NTR domain occupies 193–338 (CARACRSDLD…QIQGAIHTQC (146 aa)).

It belongs to the UPF0450 family.

The chain is UPF0450 protein C17orf58 (C17orf58) from Homo sapiens (Human).